Consider the following 730-residue polypeptide: Actin filament-associated protein 1 (730 aa).

M1 carries the post-translational modification N-acetylmethionine. The interval 47–91 (KDHAQKQETANSLPAPPQMPLPEIPQPWLPPDSGPPPLPTSSLPE) is disordered. A compositionally biased stretch (pro residues) spans 60 to 85 (PAPPQMPLPEIPQPWLPPDSGPPPLP). The SH3-binding motif lies at 71 to 74 (PQPW). Positions 94-97 (YEEA) match the SH2-binding 1 motif. Residues 119-140 (SSSYESYDEEEEDGKGKKTRHQ) form a disordered region. Residues 153–249 (DAKICAFLLR…WLKVIKEAYS (97 aa)) form the PH 1 domain. Residues 252 to 292 (SGPVDSECPPPPSSPVHKAELEKKLSSERPSSDGEGVVENG) form a disordered region. Residues 268 to 283 (HKAELEKKLSSERPSS) are compositionally biased toward basic and acidic residues. Residues S282 and S283 each carry the phosphoserine modification. The region spanning 347–441 (DVPTCGYLNV…WIGILLAETG (95 aa)) is the PH 2 domain. Positions 451–456 (YDYIDV) match the SH2-binding 2 motif. Positions 512 to 537 (KGKKPPVASNGVTGKGKTLSSQPKKA) are disordered. S548 bears the Phosphoserine mark. Positions 557–648 (KNRVEADAKR…VKESLKKALA (92 aa)) form a coiled coil. Residues 594 to 637 (DLRAAIEVNAGRKPQAILEEKLKQLEEECRQKEAERVSLELELT) form an interaction with F-actin region. S664, S665, and S668 each carry phosphoserine. The residue at position 675 (T675) is a Phosphothreonine. Residues S679 and S687 each carry the phosphoserine modification.

In terms of assembly, monomer and homomultimer. Interacts via its C-terminus with F-actin; probably involving AFAP1 multimers. Interacts with activated SRC SH3-SH2 domains. Interacts via its PH 1 domain with PRKCA, PRKCB and PRKCI. Phosphorylated on tyrosine residues by SRC. Low expression in normal breast epithelial cell line MCF-10A and in tumorigenic breast cancer cell lines MCF-7, T-47D and ZR-75-1. Highly expressed in the invasive breast cancer cell lines MDA-MB-231 and MDA-MB-435. Overexpressed in prostate carcinoma.

Its subcellular location is the cytoplasm. The protein localises to the cytoskeleton. The protein resides in the stress fiber. In terms of biological role, can cross-link actin filaments into both network and bundle structures. May modulate changes in actin filament integrity and induce lamellipodia formation. May function as an adapter molecule that links other proteins, such as SRC and PKC to the actin cytoskeleton. Seems to play a role in the development and progression of prostate adenocarcinoma by regulating cell-matrix adhesions and migration in the cancer cells. The sequence is that of Actin filament-associated protein 1 (AFAP1) from Homo sapiens (Human).